The following is a 208-amino-acid chain: Cysteine-rich protein 2 (208 aa).

Positions 5–57 (CPKCDKTVYFAEKVSSLGKDWHKFCLKCERCNKTLTPGGHAEHDGKPFCHKPC) constitute an LIM zinc-binding 1 domain. An N6-acetyllysine modification is found at lysine 23. Phosphoserine is present on serine 104. In terms of domain architecture, LIM zinc-binding 2 spans 126–178 (CPRCNKRVYFAEKVTSLGKDWHRPCLRCERCSKTLTPGGHAEHDGQPYCHKPC). 2 positions are modified to N6-acetyllysine: lysine 138 and lysine 144.

In terms of assembly, interacts with TGFB1I1.

This Mus musculus (Mouse) protein is Cysteine-rich protein 2 (Crip2).